A 395-amino-acid chain; its full sequence is Carbamoyl phosphate synthase small chain (395 aa).

The CPSase stretch occupies residues 1-192; the sequence is MTYNLHPAIL…LQYKTDKMYG (192 aa). 3 residues coordinate L-glutamine: serine 50, glycine 244, and glycine 246. A Glutamine amidotransferase type-1 domain is found at 196–383; the sequence is KIILIDFGVK…INLIKHFKQY (188 aa). The active-site Nucleophile is the cysteine 273. L-glutamine is bound by residues methionine 274, glutamine 277, asparagine 313, glycine 315, and phenylalanine 316. Residues histidine 356 and glutamate 358 contribute to the active site.

The protein belongs to the CarA family. In terms of assembly, composed of two chains; the small (or glutamine) chain promotes the hydrolysis of glutamine to ammonia, which is used by the large (or ammonia) chain to synthesize carbamoyl phosphate. Tetramer of heterodimers (alpha,beta)4.

It localises to the plastid. The protein resides in the chloroplast. It catalyses the reaction hydrogencarbonate + L-glutamine + 2 ATP + H2O = carbamoyl phosphate + L-glutamate + 2 ADP + phosphate + 2 H(+). The catalysed reaction is L-glutamine + H2O = L-glutamate + NH4(+). It functions in the pathway amino-acid biosynthesis; L-arginine biosynthesis; carbamoyl phosphate from bicarbonate: step 1/1. It participates in pyrimidine metabolism; UMP biosynthesis via de novo pathway; (S)-dihydroorotate from bicarbonate: step 1/3. Functionally, small subunit of the glutamine-dependent carbamoyl phosphate synthetase (CPSase). CPSase catalyzes the formation of carbamoyl phosphate from the ammonia moiety of glutamine, carbonate, and phosphate donated by ATP, constituting the first step of 2 biosynthetic pathways, one leading to arginine and/or urea and the other to pyrimidine nucleotides. The small subunit (glutamine amidotransferase) binds and cleaves glutamine to supply the large subunit with the substrate ammonia. The protein is Carbamoyl phosphate synthase small chain of Gracilaria tenuistipitata var. liui (Red alga).